A 331-amino-acid chain; its full sequence is tRNA U34 carboxymethyltransferase (331 aa).

Residues Lys-91, Trp-105, Lys-110, Gly-130, 152–154 (DPS), 181–182 (IE), Met-196, Tyr-200, and Arg-315 contribute to the carboxy-S-adenosyl-L-methionine site.

This sequence belongs to the class I-like SAM-binding methyltransferase superfamily. CmoB family. As to quaternary structure, homotetramer.

It catalyses the reaction carboxy-S-adenosyl-L-methionine + 5-hydroxyuridine(34) in tRNA = 5-carboxymethoxyuridine(34) in tRNA + S-adenosyl-L-homocysteine + H(+). In terms of biological role, catalyzes carboxymethyl transfer from carboxy-S-adenosyl-L-methionine (Cx-SAM) to 5-hydroxyuridine (ho5U) to form 5-carboxymethoxyuridine (cmo5U) at position 34 in tRNAs. In Shewanella baltica (strain OS155 / ATCC BAA-1091), this protein is tRNA U34 carboxymethyltransferase.